A 462-amino-acid polypeptide reads, in one-letter code: Argininosuccinate lyase (462 aa).

Belongs to the lyase 1 family. Argininosuccinate lyase subfamily.

It is found in the cytoplasm. The catalysed reaction is 2-(N(omega)-L-arginino)succinate = fumarate + L-arginine. It functions in the pathway amino-acid biosynthesis; L-arginine biosynthesis; L-arginine from L-ornithine and carbamoyl phosphate: step 3/3. This is Argininosuccinate lyase from Bacillus cereus (strain B4264).